The sequence spans 358 residues: Alanine racemase (358 aa).

Catalysis depends on lysine 35, which acts as the Proton acceptor; specific for D-alanine. Lysine 35 is subject to N6-(pyridoxal phosphate)lysine. Position 131 (arginine 131) interacts with substrate. Catalysis depends on tyrosine 253, which acts as the Proton acceptor; specific for L-alanine. Methionine 301 is a binding site for substrate.

It belongs to the alanine racemase family. Requires pyridoxal 5'-phosphate as cofactor.

The catalysed reaction is L-alanine = D-alanine. Its pathway is amino-acid biosynthesis; D-alanine biosynthesis; D-alanine from L-alanine: step 1/1. Functionally, catalyzes the interconversion of L-alanine and D-alanine. May also act on other amino acids. The sequence is that of Alanine racemase (alr) from Alteromonas mediterranea (strain DSM 17117 / CIP 110805 / LMG 28347 / Deep ecotype).